We begin with the raw amino-acid sequence, 156 residues long: Ribosomal RNA large subunit methyltransferase H (156 aa).

S-adenosyl-L-methionine contacts are provided by residues Leu73, Gly104, and 123-128; that span reads IGPLTL.

Belongs to the RNA methyltransferase RlmH family. Homodimer.

It localises to the cytoplasm. It carries out the reaction pseudouridine(1915) in 23S rRNA + S-adenosyl-L-methionine = N(3)-methylpseudouridine(1915) in 23S rRNA + S-adenosyl-L-homocysteine + H(+). Functionally, specifically methylates the pseudouridine at position 1915 (m3Psi1915) in 23S rRNA. The polypeptide is Ribosomal RNA large subunit methyltransferase H (Xanthomonas axonopodis pv. citri (strain 306)).